A 224-amino-acid chain; its full sequence is Glycerol-3-phosphate acyltransferase (224 aa).

The next 6 helical transmembrane spans lie at 4–24 (FVIV…GSIN), 60–80 (LVIF…VYFV), 88–108 (SVVV…FPIW), 124–144 (IISV…LIII), 149–169 (IVSF…FIPW), and 182–202 (WPWW…IWSH).

This sequence belongs to the PlsY family. Probably interacts with PlsX.

It is found in the cell membrane. The enzyme catalyses an acyl phosphate + sn-glycerol 3-phosphate = a 1-acyl-sn-glycero-3-phosphate + phosphate. The protein operates within lipid metabolism; phospholipid metabolism. Catalyzes the transfer of an acyl group from acyl-phosphate (acyl-PO(4)) to glycerol-3-phosphate (G3P) to form lysophosphatidic acid (LPA). This enzyme utilizes acyl-phosphate as fatty acyl donor, but not acyl-CoA or acyl-ACP. In Mycoplasmopsis pulmonis (strain UAB CTIP) (Mycoplasma pulmonis), this protein is Glycerol-3-phosphate acyltransferase.